The chain runs to 472 residues: UDP-N-acetylmuramoyl-L-alanyl-D-glutamate--2,6-diaminopimelate ligase (472 aa).

Serine 21 contributes to the UDP-N-acetyl-alpha-D-muramoyl-L-alanyl-D-glutamate binding site. ATP is bound at residue 99 to 105; that stretch reads GTNGKTS. UDP-N-acetyl-alpha-D-muramoyl-L-alanyl-D-glutamate is bound by residues 143 to 144, serine 170, glutamine 176, and arginine 178; that span reads TT. At lysine 210 the chain carries N6-carboxylysine. Meso-2,6-diaminopimelate-binding positions include arginine 367, 391 to 394, glycine 440, and glutamate 444; that span reads DNPR. Positions 391 to 394 match the Meso-diaminopimelate recognition motif motif; that stretch reads DNPR.

This sequence belongs to the MurCDEF family. MurE subfamily. Mg(2+) is required as a cofactor. In terms of processing, carboxylation is probably crucial for Mg(2+) binding and, consequently, for the gamma-phosphate positioning of ATP.

It localises to the cytoplasm. The enzyme catalyses UDP-N-acetyl-alpha-D-muramoyl-L-alanyl-D-glutamate + meso-2,6-diaminopimelate + ATP = UDP-N-acetyl-alpha-D-muramoyl-L-alanyl-gamma-D-glutamyl-meso-2,6-diaminopimelate + ADP + phosphate + H(+). The protein operates within cell wall biogenesis; peptidoglycan biosynthesis. Functionally, catalyzes the addition of meso-diaminopimelic acid to the nucleotide precursor UDP-N-acetylmuramoyl-L-alanyl-D-glutamate (UMAG) in the biosynthesis of bacterial cell-wall peptidoglycan. This is UDP-N-acetylmuramoyl-L-alanyl-D-glutamate--2,6-diaminopimelate ligase from Anaplasma marginale (strain St. Maries).